The sequence spans 369 residues: Peptide chain release factor 1 (369 aa).

The residue at position 238 (Q238) is an N5-methylglutamine.

The protein belongs to the prokaryotic/mitochondrial release factor family. Post-translationally, methylated by PrmC. Methylation increases the termination efficiency of RF1.

It is found in the cytoplasm. In terms of biological role, peptide chain release factor 1 directs the termination of translation in response to the peptide chain termination codons UAG and UAA. The chain is Peptide chain release factor 1 from Parabacteroides distasonis (strain ATCC 8503 / DSM 20701 / CIP 104284 / JCM 5825 / NCTC 11152).